We begin with the raw amino-acid sequence, 455 residues long: Kynurenine 3-monooxygenase (455 aa).

This sequence belongs to the aromatic-ring hydroxylase family. KMO subfamily. FAD is required as a cofactor.

The enzyme catalyses L-kynurenine + NADPH + O2 + H(+) = 3-hydroxy-L-kynurenine + NADP(+) + H2O. Its pathway is cofactor biosynthesis; NAD(+) biosynthesis; quinolinate from L-kynurenine: step 1/3. In terms of biological role, catalyzes the hydroxylation of L-kynurenine (L-Kyn) to form 3-hydroxy-L-kynurenine (L-3OHKyn). Required for synthesis of quinolinic acid. This chain is Kynurenine 3-monooxygenase, found in Stenotrophomonas maltophilia (strain K279a).